Here is a 357-residue protein sequence, read N- to C-terminus: Spermatogenesis- and oogenesis-specific basic helix-loop-helix-containing protein 1 (357 aa).

The span at 1-14 shows a compositional bias: basic and acidic residues; it reads MASGGHERANEDYR. Residues 1-40 are disordered; it reads MASGGHERANEDYRVSGITGCSKTPQPETQDSLQTSSQSS. Positions 19 to 31 are enriched in polar residues; it reads TGCSKTPQPETQD. Positions 54 to 105 constitute a bHLH domain; the sequence is PSLRRNVVSERERRRRISLSCEHLRALLPQFDGRREDMASVLEMSVYFLQLA. The tract at residues 145–210 is disordered; sequence KPDSGIAKPS…EPESSSLGPG (66 aa). Residues 200 to 209 show a composition bias toward low complexity; sequence SEPESSSLGP.

As to quaternary structure, forms both hetero- and homodimers with SOHLH2. In terms of tissue distribution, in males, it is mainly expressed in testis, while in females it is mainly expressed in ovary. In testis, it is exclusively expressed in spermatogonia, with a preference for prespermatogonia and type A spermatogonia. In ovary, it is detected in germ cell cysts, primordial follicles, and primary follicles but is undetectable by the secondary follicle stage (at protein level). Expressed in the majority of spermatogonia in adult animals, but not in the most undifferentiated spermatogonial population.

The protein localises to the cytoplasm. The protein resides in the nucleus. Functionally, transcription regulator of both male and female germline differentiation. Suppresses genes involved in spermatogonial stem cells maintenance, and induces genes important for spermatogonial differentiation. Coordinates oocyte differentiation without affecting meiosis I. This is Spermatogenesis- and oogenesis-specific basic helix-loop-helix-containing protein 1 (Sohlh1) from Mus musculus (Mouse).